Consider the following 2273-residue polypeptide: Linear gramicidin synthase subunit A (2273 aa).

A GART region spans residues 1-144 (MRILFLTTFM…AIEELFIREW (144 aa)). Carrier domains follow at residues 693 to 767 (APTD…TEQK) and 1724 to 1798 (APRT…TSEQ). Residues Ser728 and Ser1759 each carry the O-(pantetheine 4'-phosphoryl)serine modification.

This sequence belongs to the ATP-dependent AMP-binding enzyme family. In terms of assembly, large multienzyme complex composed of 4 subunits; LgrA, LgrB, LgrC and LgrD. Pantetheine 4'-phosphate is required as a cofactor.

In terms of biological role, activates valine (or leucine, but much less frequently), and then glycine and catalyzes the formation of the peptide bond in the first step of peptide synthesis. This enzyme may also play a role in N-formylation of the first amino acid residue in the synthesized dipeptide. This is Linear gramicidin synthase subunit A (lgrA) from Brevibacillus parabrevis.